Reading from the N-terminus, the 166-residue chain is NAD(P)H-quinone oxidoreductase subunit I, chloroplastic (166 aa).

4Fe-4S ferredoxin-type domains lie at 55 to 84 and 95 to 124; these read GRIH…VDWQ and VNYS…MTEE. Positions 64, 67, 70, 74, 104, 107, 110, and 114 each coordinate [4Fe-4S] cluster.

This sequence belongs to the complex I 23 kDa subunit family. NDH is composed of at least 16 different subunits, 5 of which are encoded in the nucleus. [4Fe-4S] cluster serves as cofactor.

It is found in the plastid. The protein resides in the chloroplast thylakoid membrane. The enzyme catalyses a plastoquinone + NADH + (n+1) H(+)(in) = a plastoquinol + NAD(+) + n H(+)(out). The catalysed reaction is a plastoquinone + NADPH + (n+1) H(+)(in) = a plastoquinol + NADP(+) + n H(+)(out). Its function is as follows. NDH shuttles electrons from NAD(P)H:plastoquinone, via FMN and iron-sulfur (Fe-S) centers, to quinones in the photosynthetic chain and possibly in a chloroplast respiratory chain. The immediate electron acceptor for the enzyme in this species is believed to be plastoquinone. Couples the redox reaction to proton translocation, and thus conserves the redox energy in a proton gradient. In Coreopsis petrophiloides (Tickseed), this protein is NAD(P)H-quinone oxidoreductase subunit I, chloroplastic.